The primary structure comprises 434 residues: Nicotinate phosphoribosyltransferase (434 aa).

Phosphohistidine; by autocatalysis is present on histidine 242.

It belongs to the NAPRTase family. Post-translationally, transiently phosphorylated on a His residue during the reaction cycle. Phosphorylation strongly increases the affinity for substrates and increases the rate of nicotinate D-ribonucleotide production. Dephosphorylation regenerates the low-affinity form of the enzyme, leading to product release.

The catalysed reaction is nicotinate + 5-phospho-alpha-D-ribose 1-diphosphate + ATP + H2O = nicotinate beta-D-ribonucleotide + ADP + phosphate + diphosphate. The protein operates within cofactor biosynthesis; NAD(+) biosynthesis; nicotinate D-ribonucleotide from nicotinate: step 1/1. Functionally, catalyzes the synthesis of beta-nicotinate D-ribonucleotide from nicotinate and 5-phospho-D-ribose 1-phosphate at the expense of ATP. This Allorhizobium ampelinum (strain ATCC BAA-846 / DSM 112012 / S4) (Agrobacterium vitis (strain S4)) protein is Nicotinate phosphoribosyltransferase.